A 311-amino-acid polypeptide reads, in one-letter code: Olfactory receptor 5L1 (311 aa).

Topologically, residues 1 to 25 (MGKENCTTVAEFILLGLSDVPELRV) are extracellular. Asn-5 carries an N-linked (GlcNAc...) asparagine glycan. The chain crosses the membrane as a helical span at residues 26–46 (CLFLLFLLIYGVTLLANLGMI). Over 47-54 (ALIQVSSR) the chain is Cytoplasmic. Residues 55 to 75 (LHTPMYFFLSHLSSVDFCYSS) traverse the membrane as a helical segment. Over 76-99 (IIVPKMLANIFNKDKAISFLGCMV) the chain is Extracellular. Residues Cys-97 and Cys-189 are joined by a disulfide bond. A helical transmembrane segment spans residues 100 to 120 (QFYLFCTCVVTEVFLLAVMAY). Over 121–139 (DRFVAICNPLLYTVTMSWK) the chain is Cytoplasmic. Residues 140 to 160 (VRVELASCCYFCGTVCSLIHL) form a helical membrane-spanning segment. Residues 161–196 (CLALRIPFYRSNVINHFFCDLPPVLSLACSDITVNE) lie on the Extracellular side of the membrane. N-linked (GlcNAc...) asparagine glycosylation is present at Asn-195. The chain crosses the membrane as a helical span at residues 197 to 217 (TLLFLVATLNESVTIMIILTS). The Cytoplasmic segment spans residues 218–237 (YLLILTTILKMGSAEGRHKA). Residues 238-258 (FSTCASHLTAITVFHGTVLSI) traverse the membrane as a helical segment. The Extracellular segment spans residues 259–271 (YCRPSSGNSGDAD). A helical transmembrane segment spans residues 272–292 (KVATVFYTVVIPMLNSVIYSL). Topologically, residues 293-311 (RNKDVKEALRKVMGSKIHS) are cytoplasmic.

The protein belongs to the G-protein coupled receptor 1 family.

It is found in the cell membrane. In terms of biological role, odorant receptor. The sequence is that of Olfactory receptor 5L1 (OR5L1) from Homo sapiens (Human).